The primary structure comprises 362 residues: Probable cinnamyl alcohol dehydrogenase 9 (362 aa).

Residue C45 participates in Zn(2+) binding. An NADP(+)-binding site is contributed by S47. Residues H67, E68, C98, C101, C104, C112, and C167 each contribute to the Zn(2+) site. Residues T171, 192–197 (GLGGLG), 215–220 (STSPWK), T255, G279, and 302–304 (SMI) contribute to the NADP(+) site.

It belongs to the zinc-containing alcohol dehydrogenase family. In terms of assembly, homodimer. It depends on Zn(2+) as a cofactor.

It carries out the reaction (E)-cinnamyl alcohol + NADP(+) = (E)-cinnamaldehyde + NADPH + H(+). It catalyses the reaction (E)-coniferol + NADP(+) = (E)-coniferaldehyde + NADPH + H(+). The catalysed reaction is (E)-sinapyl alcohol + NADP(+) = (E)-sinapaldehyde + NADPH + H(+). The enzyme catalyses (E)-4-coumaroyl alcohol + NADP(+) = (E)-4-coumaraldehyde + NADPH + H(+). It carries out the reaction (E)-caffeyl alcohol + NADP(+) = (E)-caffeyl aldehyde + NADPH + H(+). The protein operates within aromatic compound metabolism; phenylpropanoid biosynthesis. In terms of biological role, involved in lignin biosynthesis. Catalyzes the final step specific for the production of lignin monomers. Catalyzes the NADPH-dependent reduction of coniferaldehyde, 5-hydroxyconiferaldehyde, sinapaldehyde, 4-coumaraldehyde and caffeyl aldehyde to their respective alcohols. This chain is Probable cinnamyl alcohol dehydrogenase 9, found in Oryza sativa subsp. japonica (Rice).